Consider the following 445-residue polypeptide: MAVQIENLGSVDRKTTLEFARADLAKLREARLAKVGKTMKVAGFRPGKVPKSMVEKQYGMQVDFELQFDKASDLFYELCQKEGIPLAGQPRLEPKSELEAETIAFDVFFEVLPEVKMGDFSAAEVTKYTTEIGEAEIDRAIDVLRKQQVHYHARGEAGAHGDGGANTAAQNGDQVVIDFVGKLDGVEFAGGKAENFEFVLGEGRMLPEFEAAALGLKVGESKSFPLTFPADYHGKDVAGKTAEFTITVKSVNWAHMPVVDDAFALSLGVAEGGVAKMREEVKENLDREVKRRITSLLKSEVMDKLNALCELDVPKSLVTSEQERLVQSARQDLMQRGVPNAKDAPIPAEIFAEQATKRVRLGLILGELVKKQNLAATTDQIKAEIEEQAATYEDPKEVVRWYYSNPSRLKDIENLVLEDNVIKHFTSLAKVVDKAITFEELSKLN.

Residues 172 to 257 (GDQVVIDFVG…VKSVNWAHMP (86 aa)) form the PPIase FKBP-type domain.

The protein belongs to the FKBP-type PPIase family. Tig subfamily.

The protein localises to the cytoplasm. The enzyme catalyses [protein]-peptidylproline (omega=180) = [protein]-peptidylproline (omega=0). In terms of biological role, involved in protein export. Acts as a chaperone by maintaining the newly synthesized protein in an open conformation. Functions as a peptidyl-prolyl cis-trans isomerase. This Polynucleobacter asymbioticus (strain DSM 18221 / CIP 109841 / QLW-P1DMWA-1) (Polynucleobacter necessarius subsp. asymbioticus) protein is Trigger factor.